We begin with the raw amino-acid sequence, 985 residues long: Ephrin type-B receptor 1-A (985 aa).

The signal sequence occupies residues 1–19 (MELNVLLLLLCLSGGQVGA). Residues 20 to 542 (VEETLMDTRT…YKSELREQLP (523 aa)) are Extracellular-facing. The 183-residue stretch at 21–203 (EETLMDTRTA…FFKEMPSVVQ (183 aa)) folds into the Eph LBD domain. Fibronectin type-III domains follow at residues 324–434 (VPSG…TNQA) and 435–532 (APSS…TAED). Residues Asn-336, Asn-428, and Asn-482 are each glycosylated (N-linked (GlcNAc...) asparagine). A helical transmembrane segment spans residues 543 to 563 (LTGSAAAGVVFIVSLVAISIV). Over 564 to 985 (CSRKRTYSKE…QITQSPTSIA (422 aa)) the chain is Cytoplasmic. The Protein kinase domain occupies 620–883 (VKIEEVIGAG…EIVNTLRPMI (264 aa)). Residues 626-634 (IGAGEFGEV) and Lys-652 contribute to the ATP site. The active-site Proton acceptor is Asp-745. An SAM domain is found at 912–976 (SAFTSVDDWL…LNSIQSMRVQ (65 aa)). The PDZ-binding motif lies at 983-985 (SIA).

It belongs to the protein kinase superfamily. Tyr protein kinase family. Ephrin receptor subfamily. In terms of assembly, heterotetramer upon binding of the ligand. The heterotetramer is composed of an ephrin dimer and a receptor dimer. Oligomerization is probably required to induce biological responses. Post-translationally, phosphorylated. Autophosphorylation is stimulated by ligands.

Its subcellular location is the cell membrane. It localises to the early endosome membrane. The protein resides in the cell projection. It is found in the dendrite. It carries out the reaction L-tyrosyl-[protein] + ATP = O-phospho-L-tyrosyl-[protein] + ADP + H(+). Its function is as follows. Receptor tyrosine kinase which binds promiscuously transmembrane ephrin-B family ligands residing on adjacent cells, leading to contact-dependent bidirectional signaling into neighboring cells. The signaling pathway downstream of the receptor is referred to as forward signaling while the signaling pathway downstream of the ephrin ligand is referred to as reverse signaling. May play a role in axon guidance during nervous system development. May also play an important redundant role with other ephrin-B receptors in development and maturation of dendritic spines and synapse formation. More generally, may play a role in targeted cell migration and adhesion. Upon activation by ephrin-B ligands activates the MAPK/ERK and the JNK signaling cascades to regulate cell migration and adhesion respectively. The protein is Ephrin type-B receptor 1-A (ephb1-a) of Xenopus laevis (African clawed frog).